The primary structure comprises 959 residues: Outer capsid protein VP2 (959 aa).

It belongs to the orbivirus VP2 family.

The protein localises to the virion. The VP2 protein is one of the two proteins (with VP5) which constitute the virus particle outer capsid. It is the major target of the host immunogenic response. Responsible for viral attachment to target host cell, probably by binding to sialic acid. This attachment induces virion internalization predominantly through clathrin-dependent endocytosis. The sequence is that of Outer capsid protein VP2 (Segment-2) from Antilocapra americana (Pronghorn).